The primary structure comprises 239 residues: uncharacterized protein (239 aa).

This is an uncharacterized protein from Saccharomyces cerevisiae (strain ATCC 204508 / S288c) (Baker's yeast).